Reading from the N-terminus, the 142-residue chain is Large ribosomal subunit protein uL13 (142 aa).

It belongs to the universal ribosomal protein uL13 family. In terms of assembly, part of the 50S ribosomal subunit.

Functionally, this protein is one of the early assembly proteins of the 50S ribosomal subunit, although it is not seen to bind rRNA by itself. It is important during the early stages of 50S assembly. The polypeptide is Large ribosomal subunit protein uL13 (Thioalkalivibrio sulfidiphilus (strain HL-EbGR7)).